We begin with the raw amino-acid sequence, 533 residues long: Frizzled/smoothened-like sans CRD protein H (533 aa).

The first 21 residues, 1 to 21, serve as a signal peptide directing secretion; sequence MFIKFYFFIIFLILNFKNNYA. The Extracellular portion of the chain corresponds to 22–103; it reads SPTLLDSVLS…GDWTTMMDMS (82 aa). A glycan (N-linked (GlcNAc...) asparagine) is linked at Asn-76. The helical transmembrane segment at 104–124 threads the bilayer; it reads LIVATISFFASIFLILTYSPL. The Cytoplasmic portion of the chain corresponds to 125-134; the sequence is MNPSYNNRHT. The chain crosses the membrane as a helical span at residues 135–155; that stretch reads IGILSMSFGIFLIMFTDMYNL. Over 156 to 177 the chain is Extracellular; that stretch reads KKRFTLGCPSETRYAIQNDADC. Residues 178-198 traverse the membrane as a helical segment; that stretch reads LITGLIFQFGCVSAVFFWTAL. Residues 199 to 216 lie on the Cytoplasmic side of the membrane; that stretch reads SLDLYFQITNRNISRKYD. Residues 217–237 traverse the membrane as a helical segment; it reads LYYFIGVNLISLIFTFVPVIS. The Extracellular portion of the chain corresponds to 238–259; sequence KSYGYGDFALGCWILDFNYALG. The chain crosses the membrane as a helical span at residues 260-280; it reads CFWIPLSVCLIFSTVVVLMIL. Over 281–302 the chain is Cytoplasmic; sequence YEVYKIYKASNQKTSLKGHIKP. Residues 303–323 form a helical membrane-spanning segment; sequence LLCLISNCFEFFYVFGYSLYL. The Extracellular segment spans residues 324–360; it reads ATKLTELHDNMDAYIKCLFLNSQNDPDSYTCPDHRLK. The chain crosses the membrane as a helical span at residues 361 to 381; that stretch reads LGPQFLFFLSLRLLGVSGIVF. Over 382 to 533 the chain is Cytoplasmic; it reads YGTNSKVRKI…LTNINTIDNV (152 aa). The interval 454 to 533 is disordered; the sequence is IIVTPGGDDD…LTNINTIDNV (80 aa). Residues 466-518 show a composition bias toward low complexity; that stretch reads NNNNNNNNNNNNNNNNNNNNNNNNNNNNNNNNNNNNNNNNNNNNNSNENNENN. Residues 501 to 528 adopt a coiled-coil conformation; the sequence is NNNNNNNNNNSNENNENNTQEIELTNIN. Positions 519–533 are enriched in polar residues; the sequence is TQEIELTNINTIDNV.

It belongs to the G-protein coupled receptor Fz/Smo family.

The protein resides in the membrane. This Dictyostelium discoideum (Social amoeba) protein is Frizzled/smoothened-like sans CRD protein H (fscH).